We begin with the raw amino-acid sequence, 48 residues long: MLSTESWDNCEKPPLLFPFTALTCDETPVFSGSVLNLVAHSVDKYGIG.

This is Protein YgdT (ygdT) from Escherichia coli (strain K12).